A 440-amino-acid polypeptide reads, in one-letter code: Tyrosine--tRNA ligase (440 aa).

Tyrosine 46 lines the L-tyrosine pocket. The short motif at 51 to 60 is the 'HIGH' region element; it reads PTAASLHIGN. L-tyrosine-binding residues include tyrosine 181 and glutamine 185. The short motif at 241–245 is the 'KMSKS' region element; that stretch reads KFGKS. Residue lysine 244 participates in ATP binding. Positions 373-439 constitute an S4 RNA-binding domain; sequence DRVIDAAQAA…GKKALGAVEN (67 aa).

It belongs to the class-I aminoacyl-tRNA synthetase family. TyrS type 1 subfamily. As to quaternary structure, homodimer.

Its subcellular location is the cytoplasm. The enzyme catalyses tRNA(Tyr) + L-tyrosine + ATP = L-tyrosyl-tRNA(Tyr) + AMP + diphosphate + H(+). Its function is as follows. Catalyzes the attachment of tyrosine to tRNA(Tyr) in a two-step reaction: tyrosine is first activated by ATP to form Tyr-AMP and then transferred to the acceptor end of tRNA(Tyr). This chain is Tyrosine--tRNA ligase, found in Bifidobacterium longum subsp. infantis (strain ATCC 15697 / DSM 20088 / JCM 1222 / NCTC 11817 / S12).